The chain runs to 134 residues: MGGGERYNIPDPQSRNASKNQQQHNRQKTKDQNSQMKIVHKKKERGHGYNPSAVQNGGKTKSLSNNSNWNASLSSPSLLFKSQASQNYAGAKFSEPPSPSVLPKPPSHWVHVSLNPSDKETMTFQLKTLLKVQV.

A disordered region spans residues 1–74; it reads MGGGERYNIP…NNSNWNASLS (74 aa). Composition is skewed to polar residues over residues 11-24 and 52-61; these read DPQS…QQQH and SAVQNGGKTK. Low complexity predominate over residues 62-74; that stretch reads SLSNNSNWNASLS. The SH3-binding signature appears at 94–100; that stretch reads SEPPSPS.

It belongs to the PNRC family. PNRC2 subfamily. As to quaternary structure, interacts with UPF1/RENT1; preferentially interacts with hyperphosphorylated form. Interacts with DCP1A. Interacts with many nuclear receptors including ESR1, ESRRA, ESRRG, NR3C1/GR, NR5A1, PGR, TR, RAR and RXR.

Its subcellular location is the nucleus. The protein resides in the cytoplasm. The protein localises to the P-body. Functionally, involved in nonsense-mediated mRNA decay (NMD) by acting as a bridge between the mRNA decapping complex and the NMD machinery. May act by targeting the NMD machinery to the P-body and recruiting the decapping machinery to aberrant mRNAs. Required for UPF1/RENT1 localization to the P-body. Plays a role in glucocorticoid receptor-mediated mRNA degradation by interacting with the glucocorticoid receptor NR3C1 in a ligand-dependent manner when it is bound to the 5' UTR of target mRNAs and recruiting the RNA helicase UPF1 and the mRNA-decapping enzyme DCP1A, leading to RNA decay. Also acts as a nuclear receptor coactivator. May play a role in controlling the energy balance between energy storage and energy expenditure. The chain is Proline-rich nuclear receptor coactivator 2 (Pnrc2) from Rattus norvegicus (Rat).